The following is a 332-amino-acid chain: Probable ABC transporter permease protein YphD (332 aa).

Helical transmembrane passes span 28–48, 63–83, 84–104, 105–125, 131–151, 172–192, 222–242, 251–271, 278–298, and 303–323; these read GLLV…PGFI, IGIA…DVSV, GPMV…EVPL, AVAC…AGVL, VPSF…GLFM, FLGV…FVFI, VRIL…ILLA, GAAN…GTAL, LFGT…LVLL, and FFQQ…NILL.

The protein belongs to the binding-protein-dependent transport system permease family. AraH/RbsC subfamily.

The protein localises to the cell inner membrane. In terms of biological role, probably part of the binding-protein-dependent transport system YphDEF. Probably responsible for the translocation of the substrate across the membrane. The chain is Probable ABC transporter permease protein YphD (yphD) from Escherichia coli (strain K12).